The sequence spans 96 residues: Dynein light chain roadblock-type 2 (96 aa).

Ala2 carries the post-translational modification N-acetylalanine.

The protein belongs to the GAMAD family. Homodimer. The cytoplasmic dynein 1 complex consists of two catalytic heavy chains (HCs) and a number of non-catalytic subunits presented by intermediate chains (ICs), light intermediate chains (LICs) and light chains (LCs); the composition seems to vary in respect to the IC, LIC and LC composition. The heavy chain homodimer serves as a scaffold for the probable homodimeric assembly of the respective non-catalytic subunits. The ICs and LICs bind directly to the HC dimer and the LCs assemble on the IC dimer. Interacts with DYNC1I1 and DYNC1I2. Self-associates. Interacts with DYNLRB1. In terms of tissue distribution, high expression in heart, brain, placenta, skeletal muscle, prostate and small intestine; moderate in kidney, pancreas, spleen, testis, ovary and colon; low in lung, liver, thymus and leukocyte.

The protein localises to the cytoplasm. The protein resides in the cytoskeleton. Functionally, acts as one of several non-catalytic accessory components of the cytoplasmic dynein 1 complex that are thought to be involved in linking dynein to cargos and to adapter proteins that regulate dynein function. Cytoplasmic dynein 1 acts as a motor for the intracellular retrograde motility of vesicles and organelles along microtubules. This chain is Dynein light chain roadblock-type 2 (DYNLRB2), found in Homo sapiens (Human).